Reading from the N-terminus, the 264-residue chain is THAP domain-containing protein 10 (264 aa).

A THAP-type zinc finger spans residues 1 to 90 (MPARCVAAHC…LVAGAVPTLH (90 aa)). Disordered stretches follow at residues 90 to 136 (HRVP…PRAG) and 160 to 195 (TQPH…KRPR). The span at 99–122 (GGEEGDQAGRPDTRGELQAARHSE) shows a compositional bias: basic and acidic residues. Residues 160 to 175 (TQPHADNPSNTVTSVP) show a composition bias toward polar residues.

In Pongo abelii (Sumatran orangutan), this protein is THAP domain-containing protein 10 (THAP10).